Here is a 264-residue protein sequence, read N- to C-terminus: uncharacterized protein (264 aa).

The first 22 residues, 1-22, serve as a signal peptide directing secretion; that stretch reads MIHSKKLTLGICLVLLIILIGG. Residue cysteine 23 is the site of N-palmitoyl cysteine attachment. Cysteine 23 carries S-diacylglycerol cysteine lipidation.

It belongs to the staphylococcal tandem lipoprotein family.

The protein localises to the cell membrane. This is an uncharacterized protein from Staphylococcus aureus (strain N315).